The sequence spans 1283 residues: Bifunctional dioxygenase (DOX)-epoxy alcohol synthase (EAS) (1283 aa).

The disordered stretch occupies residues 1 to 64; that stretch reads MAEHKNGVAT…LPKEMGDGSY (64 aa). A fatty acid alpha-dioxygenase region spans residues 130–476; sequence TNSFISQLWN…DGKFNDDELV (347 aa). His-227 contributes to the heme b binding site. Residue Tyr-405 is part of the active site. A heme b-binding site is contributed by His-408. Positions 684 to 1108 are epoxy alcohol synthase; sequence INIIGYNAAK…WDDGCGTDLF (425 aa). Position 1035 (Cys-1035) interacts with heme.

In the N-terminal section; belongs to the peroxidase family. This sequence in the C-terminal section; belongs to the cytochrome P450 family. In terms of assembly, homotetramer. Heme b is required as a cofactor. It depends on heme as a cofactor.

The catalysed reaction is (9Z,12Z)-octadecadienoate + O2 = (8E,10R,12Z)-10-hydroperoxyoctadeca-8,12-dienoate. It carries out the reaction (8E,10R,12Z)-10-hydroperoxyoctadeca-8,12-dienoate = (12S,13R)-epoxy-(10R)-hydroxy-(8E)-octadecenoate. The enzyme catalyses (9Z)-octadecenoate + O2 = (8R)-hydroperoxy-(9Z)-octadecenoate. Functionally, bifunctional dioxygenase (DOX)-epoxy alcohol synthase (EAS) that converts linoleic acid (18:2n-6) sequentially to 10(R)-hydroperoxy-8(E),12(Z)-octadecadienoic acid (10R-HPODE) and 10R-HPODE further to 12(13)-epoxy-10-hydroxy-8(E)-octa-decenoic acid as the end product. Linoleic acid is oxidized mainly to the R stereoisomer of 10-HPODE. The dioxygenase domain is also able to oygenate position C-8 of linoleic acid to produce 8(R)-hydroperoxy-8(E),12(Z)-octadecadienoic acid (8R-HPODE). This Fusarium oxysporum (strain Fo5176) (Fusarium vascular wilt) protein is Bifunctional dioxygenase (DOX)-epoxy alcohol synthase (EAS).